A 631-amino-acid chain; its full sequence is ATP-dependent protease PrkA (631 aa).

Thr-217 is subject to Phosphothreonine. A Phosphoserine modification is found at Ser-219.

The protein belongs to the PrkA family. In terms of processing, phosphorylated by PrkC on two sites, Thr-217 and Ser-219, with the threonine being the major site of modification.

Its subcellular location is the forespore. It is found in the spore coat. It catalyses the reaction Hydrolysis of proteins in presence of ATP.. Its activity is regulated as follows. Hydrolase activity is regulated by phosphorylation by the Ser/Thr kinase PrkC, probably allowing fine control of sporulation. Phosphorylation by PrkC does not prevent ATP fixation but it inhibits specifically PrkA protease activity and down-regulates the sporulation processes. Hydrolase activity is inhibited by a protease inhibitor, phenylmethylsulfonyl fluoride (PMSF). Potential kinase activity requires the presence of MgCl(2) and is inhibited in the presence of MnCl(2). In terms of biological role, ATP-dependent protease that regulates sporulation. Is able to bind and hydrolyze ATP. This ATP-dependent protease activity is necessary for efficient sporulation of B.subtilis. In vitro, can hydrolyze alpha-casein, an exogenous substrate of Lon proteases, in an ATP-dependent manner. PrkA also modulates sporulation by negatively regulating the transcriptional regulator Hpr/ScoC to induce the expression of sigK. The control of sporulation mediated via the Hpr/ScoC regulator is probably indirect. PrkA was originally thought to be a protein kinase, as it has been shown to phosphorylate in vitro an unidentified 60 kDa protein from B.subtilis crude extracts at a serine residue. However, Zhang et al. did not observe autophosphorylation or kinase activity for this protein, suggesting that it may have lost its kinase activity during evolution or may be a pseudokinase. This Bacillus subtilis (strain 168) protein is ATP-dependent protease PrkA.